Here is a 116-residue protein sequence, read N- to C-terminus: Large ribosomal subunit protein uL18 (116 aa).

The protein belongs to the universal ribosomal protein uL18 family. Part of the 50S ribosomal subunit; part of the 5S rRNA/L5/L18/L25 subcomplex. Contacts the 5S and 23S rRNAs.

In terms of biological role, this is one of the proteins that bind and probably mediate the attachment of the 5S RNA into the large ribosomal subunit, where it forms part of the central protuberance. In Shewanella denitrificans (strain OS217 / ATCC BAA-1090 / DSM 15013), this protein is Large ribosomal subunit protein uL18.